The sequence spans 548 residues: Chaperonin GroEL (548 aa).

ATP contacts are provided by residues 30-33, lysine 51, 87-91, glycine 415, and aspartate 494; these read TLGP and DGTTT.

This sequence belongs to the chaperonin (HSP60) family. Forms a cylinder of 14 subunits composed of two heptameric rings stacked back-to-back. Interacts with the co-chaperonin GroES.

The protein resides in the cytoplasm. The catalysed reaction is ATP + H2O + a folded polypeptide = ADP + phosphate + an unfolded polypeptide.. Its function is as follows. Together with its co-chaperonin GroES, plays an essential role in assisting protein folding. The GroEL-GroES system forms a nano-cage that allows encapsulation of the non-native substrate proteins and provides a physical environment optimized to promote and accelerate protein folding. This Oleispira antarctica protein is Chaperonin GroEL.